We begin with the raw amino-acid sequence, 142 residues long: uncharacterized protein (142 aa).

This is an uncharacterized protein from Pseudomonas putida (Arthrobacter siderocapsulatus).